Here is a 301-residue protein sequence, read N- to C-terminus: Acetylglutamate kinase (301 aa).

Substrate is bound by residues 68–69, Arg-90, and Asn-195; that span reads GG.

Belongs to the acetylglutamate kinase family. ArgB subfamily.

It localises to the cytoplasm. It carries out the reaction N-acetyl-L-glutamate + ATP = N-acetyl-L-glutamyl 5-phosphate + ADP. It participates in amino-acid biosynthesis; L-arginine biosynthesis; N(2)-acetyl-L-ornithine from L-glutamate: step 2/4. Functionally, catalyzes the ATP-dependent phosphorylation of N-acetyl-L-glutamate. The polypeptide is Acetylglutamate kinase (Pseudomonas putida (strain GB-1)).